The chain runs to 211 residues: SOSS complex subunit B1 (211 aa).

The segment at residues 22–92 (IVLETGRVTK…TLYTGRGGDL (71 aa)) is a DNA-binding region (OB). The interval 110-211 (EPNPEYSAQQ…GKETRRSSKR (102 aa)) is disordered. Over residues 115–128 (YSAQQAPNKTVQND) the composition is skewed to polar residues. 2 stretches are compositionally biased toward pro residues: residues 133–143 (APQPPTGPPAT) and 165–174 (PHPPHTPSHP).

It belongs to the SOSS-B family. SOSS-B1 subfamily. As to quaternary structure, component of the SOSS complex, composed of SOSS-B (SOSS-B1/NABP2 or SOSS-B2/NABP1), SOSS-A/INTS3 and SOSS-C/INIP. SOSS complexes containing SOSS-B1/NABP2 are more abundant than complexes containing SOSS-B2/NABP1. Directly interacts with ATM, SOSS-A/INTS3 and RAD51. Interacts with INTS7. In terms of processing, phosphorylated by ATM in response to DNA damage. Phosphorylation prevents degradation by the proteasome, hence stabilization of the protein and accumulation within cells. Ubiquitinated in a FBXL5-dependent manner, leading to proteasomal degradation.

Its subcellular location is the nucleus. Component of the SOSS complex, a multiprotein complex that functions downstream of the MRN complex to promote DNA repair and G2/M checkpoint. In the SOSS complex, acts as a sensor of single-stranded DNA that binds to single-stranded DNA, in particular to polypyrimidines. The SOSS complex associates with DNA lesions and influences diverse endpoints in the cellular DNA damage response including cell-cycle checkpoint activation, recombinational repair and maintenance of genomic stability. Required for efficient homologous recombination-dependent repair of double-strand breaks (DSBs) and ATM-dependent signaling pathways. This chain is SOSS complex subunit B1 (NABP2), found in Bos taurus (Bovine).